Here is a 1361-residue protein sequence, read N- to C-terminus: Rho guanine nucleotide exchange factor 18 (1361 aa).

3 disordered regions span residues 33–88, 131–156, and 244–292; these read LQDL…SCSE, SGGGTPAESPGKECDSPKKRGRSRSV, and DGAG…ARER. Over residues 50–61 the composition is skewed to basic and acidic residues; the sequence is PDSRPTGEEPGR. Residues 64 to 73 show a composition bias toward polar residues; that stretch reads LFSSLAGSQD. Residues 74-88 are compositionally biased toward basic and acidic residues; the sequence is LSRRRSWERSRSCSE. Basic and acidic residues-rich tracts occupy residues 245-256 and 271-292; these read GAGKNEKSDKST and RQKEKGKSPAHLKDKGQDARER. The C2H2-type; degenerate zinc-finger motif lies at 310–334; the sequence is SSCPLCGKPFLSSASLKEHPRGTLL. Positions 348-368 are disordered; it reads TVSQKGGPQPTPSPAGPGTQL. The region spanning 447–644 is the DH domain; it reads KRQDVLYELM…KDIISQVDAK (198 aa). In terms of domain architecture, PH spans 684–786; it reads QLHLEGMLCW…WMAHIQRAVE (103 aa). Disordered stretches follow at residues 893 to 980, 1143 to 1211, 1229 to 1264, and 1277 to 1361; these read ANGQ…DPRL, LKKQ…RLAK, AAVQQQIPTKLAASTKGGKDKGGKSRGSQRWESSAS, and MGKD…VIFF. Threonine 912 is modified (phosphothreonine). At serine 921 the chain carries Phosphoserine. Residues 1038–1148 are a coiled coil; sequence LEQERQRNFE…LLRRLKKQNT (111 aa). Positions 1191–1211 are enriched in basic and acidic residues; the sequence is YAERPEVARRDSAPTENRLAK. Positions 1254 to 1264 are enriched in polar residues; that stretch reads RGSQRWESSAS. Residues serine 1289 and serine 1291 each carry the phosphoserine modification. 2 stretches are compositionally biased toward pro residues: residues 1300 to 1317 and 1334 to 1344; these read PAPPPDPGFPAPSPPPAD and PGPPAPSPLPA. Residues 1349–1361 show a composition bias toward basic and acidic residues; the sequence is AKEDASKEDVIFF.

In terms of assembly, interacts with SEPT9; the interaction may inhibit GEF activity. Interacts with Gbetagamma subunits GNB1 and GNG2. Interacts with EPB41L4B. Interacts with PATJ (via C-terminus). Expressed in all tissues tested with highest expression in kidney and pancreas. Weakly or not expressed in liver, skeletal muscle and testis. Isoform 1: Expressed in eosinophils. Isoform 2: Expressed in eosinophils. Isoform 3: Expressed in eosinophils. Isoform 4: Not detected in eosinophils.

It localises to the cytoplasm. The protein resides in the cytoskeleton. The protein localises to the cell membrane. Its subcellular location is the apical cell membrane. Functionally, acts as a guanine nucleotide exchange factor (GEF) for RhoA GTPases. Its activation induces formation of actin stress fibers. Also acts as a GEF for RAC1, inducing production of reactive oxygen species (ROS). Does not act as a GEF for CDC42. The G protein beta-gamma (Gbetagamma) subunits of heterotrimeric G proteins act as activators, explaining the integrated effects of LPA and other G-protein coupled receptor agonists on actin stress fiber formation, cell shape change and ROS production. Required for EPB41L4B-mediated regulation of the circumferential actomyosin belt in epithelial cells. The protein is Rho guanine nucleotide exchange factor 18 (ARHGEF18) of Homo sapiens (Human).